The following is a 73-amino-acid chain: uncharacterized protein (73 aa).

The next 2 helical transmembrane spans lie at 10–30 and 42–62; these read ILLA…YVSA and YSTV…IYLI.

The protein localises to the cell membrane. This is an uncharacterized protein from Archaeoglobus fulgidus (strain ATCC 49558 / DSM 4304 / JCM 9628 / NBRC 100126 / VC-16).